Consider the following 95-residue polypeptide: MDMKAMLKQAQKMQADLEKKQSELAKKEFNISKQGVEIVINGAKEITKLVIHPALIDEDDKETLEDLLILAFNEAISLISEEEAKIAPKANSLGF.

The protein belongs to the YbaB/EbfC family. As to quaternary structure, homodimer.

It localises to the cytoplasm. The protein resides in the nucleoid. Binds to DNA and alters its conformation. May be involved in regulation of gene expression, nucleoid organization and DNA protection. In Mycoplasma mobile (strain ATCC 43663 / 163K / NCTC 11711) (Mesomycoplasma mobile), this protein is Nucleoid-associated protein MMOB0740.